Reading from the N-terminus, the 193-residue chain is Recombination protein RecR (193 aa).

A C4-type zinc finger spans residues 61-76; it reads CSSCNALSESEVCEIC. One can recognise a Toprim domain in the interval 84–170; it reads SQLCMVLHPR…TFTKIAQGVP (87 aa).

The protein belongs to the RecR family.

Its function is as follows. May play a role in DNA repair. It seems to be involved in an RecBC-independent recombinational process of DNA repair. It may act with RecF and RecO. The polypeptide is Recombination protein RecR (Helicobacter pylori (strain P12)).